A 143-amino-acid polypeptide reads, in one-letter code: Transcriptional regulator MraZ (143 aa).

2 consecutive SpoVT-AbrB domains span residues 5–47 (EFLH…PMDE) and 76–119 (AIEC…ANDA).

This sequence belongs to the MraZ family. Forms oligomers.

The protein resides in the cytoplasm. It is found in the nucleoid. This is Transcriptional regulator MraZ from Oceanobacillus iheyensis (strain DSM 14371 / CIP 107618 / JCM 11309 / KCTC 3954 / HTE831).